Reading from the N-terminus, the 113-residue chain is Protein suex-1 (113 aa).

A signal peptide spans 1-22 (MQSLLVFCLATIILSNFTEASA).

In Caenorhabditis elegans, this protein is Protein suex-1.